A 302-amino-acid polypeptide reads, in one-letter code: tRNA pseudouridine synthase B (302 aa).

Catalysis depends on aspartate 45, which acts as the Nucleophile.

It belongs to the pseudouridine synthase TruB family. Type 1 subfamily.

The catalysed reaction is uridine(55) in tRNA = pseudouridine(55) in tRNA. In terms of biological role, responsible for synthesis of pseudouridine from uracil-55 in the psi GC loop of transfer RNAs. This chain is tRNA pseudouridine synthase B, found in Francisella tularensis subsp. holarctica (strain FTNF002-00 / FTA).